Reading from the N-terminus, the 802-residue chain is Penicillin G acylase (802 aa).

The signal sequence occupies residues 1–26 (MKMKWLISVIILFVFIFPQNLVFAGE). A Ca(2+)-binding site is contributed by Glu177. A propeptide spans 235-265 (SAVIKASEKVGKERENFVQSSEELGLPLKIG) (spacer peptide). Ser266 functions as the Nucleophile in the catalytic mechanism. Asp341 is a binding site for Ca(2+).

This sequence belongs to the peptidase S45 family. As to quaternary structure, heterodimer of an alpha subunit and a beta subunit processed from the same precursor. Requires Ca(2+) as cofactor.

It is found in the secreted. It carries out the reaction a penicillin + H2O = 6-aminopenicillanate + a carboxylate. This Rhizobium viscosum (Arthrobacter viscosus) protein is Penicillin G acylase (pac).